Consider the following 658-residue polypeptide: DNA ligase (658 aa).

NAD(+)-binding positions include 32 to 36 (DAVYD) and 81 to 82 (SL). Lysine 112 (N6-AMP-lysine intermediate) is an active-site residue. NAD(+) is bound by residues arginine 133, glutamate 167, and lysine 306. Cysteine 400, cysteine 403, cysteine 416, and cysteine 421 together coordinate Zn(2+). The BRCT domain maps to 577-658 (ESSSVFNNKT…LKRLKKLDQN (82 aa)).

Belongs to the NAD-dependent DNA ligase family. LigA subfamily. Mg(2+) serves as cofactor. It depends on Mn(2+) as a cofactor.

The catalysed reaction is NAD(+) + (deoxyribonucleotide)n-3'-hydroxyl + 5'-phospho-(deoxyribonucleotide)m = (deoxyribonucleotide)n+m + AMP + beta-nicotinamide D-nucleotide.. Its function is as follows. DNA ligase that catalyzes the formation of phosphodiester linkages between 5'-phosphoryl and 3'-hydroxyl groups in double-stranded DNA using NAD as a coenzyme and as the energy source for the reaction. It is essential for DNA replication and repair of damaged DNA. The protein is DNA ligase of Helicobacter pylori (strain G27).